A 513-amino-acid polypeptide reads, in one-letter code: Gluconokinase (513 aa).

ATP is bound by residues lysine 16, threonine 261, glycine 300, and 412–416 (GFARS).

It belongs to the FGGY kinase family.

The catalysed reaction is D-gluconate + ATP = 6-phospho-D-gluconate + ADP + H(+). It functions in the pathway carbohydrate acid metabolism; D-gluconate degradation. Its activity is regulated as follows. Catabolite repression by gluconate. This Bacillus subtilis (strain 168) protein is Gluconokinase (gntK).